A 59-amino-acid chain; its full sequence is Small ribosomal subunit protein bS21 (59 aa).

Positions lysine 40–arginine 59 are disordered.

The protein belongs to the bacterial ribosomal protein bS21 family.

The chain is Small ribosomal subunit protein bS21 from Protochlamydia amoebophila (strain UWE25).